The sequence spans 61 residues: Small ribosomal subunit protein uS14 (61 aa).

4 residues coordinate Zn(2+): Cys-24, Cys-27, Cys-40, and Cys-43.

Belongs to the universal ribosomal protein uS14 family. Zinc-binding uS14 subfamily. In terms of assembly, part of the 30S ribosomal subunit. Contacts proteins S3 and S10. It depends on Zn(2+) as a cofactor.

Its function is as follows. Binds 16S rRNA, required for the assembly of 30S particles and may also be responsible for determining the conformation of the 16S rRNA at the A site. This Endomicrobium trichonymphae protein is Small ribosomal subunit protein uS14.